The following is a 127-amino-acid chain: Histone H2B.2 (127 aa).

The disordered stretch occupies residues 1–35; it reads MAPKAEKKPASKAPAAKKTTASTDASKKRTKTRKE. N6-acetyllysine; alternate occurs at positions 7 and 8. Glycyl lysine isopeptide (Lys-Gly) (interchain with G-Cter in SUMO); alternate cross-links involve residues lysine 7 and lysine 8. Serine 11 carries the post-translational modification Phosphoserine. Residues 11 to 24 show a composition bias toward low complexity; the sequence is SKAPAAKKTTASTD. N6-acetyllysine is present on lysine 12. Residue lysine 120 forms a Glycyl lysine isopeptide (Lys-Gly) (interchain with G-Cter in ubiquitin) linkage.

Belongs to the histone H2B family. In terms of assembly, the nucleosome is a histone octamer containing two molecules each of H2A, H2B, H3 and H4 assembled in one H3-H4 heterotetramer and two H2A-H2B heterodimers. The octamer wraps approximately 147 bp of DNA. Monoubiquitinated by the UBC2-BRE1 complex to form H2BK123ub1. H2BK123ub1 gives a specific tag for epigenetic transcriptional activation and is also prerequisite for H3K4me and H3K79me formation. H2BK123ub1 also modulates the formation of double-strand breaks during meiosis and is a prerequisite for DNA-damage checkpoint activation. Post-translationally, phosphorylated by STE20 to form H2BS10ph during progression through meiotic prophase. May be correlated with chromosome condensation. In terms of processing, acetylation of N-terminal lysines and particularly formation of H2BK11ac has a positive effect on transcription. Sumoylation to form H2BK6su or H2BK7su occurs preferentially near the telomeres and represses gene transcription.

The protein localises to the nucleus. It is found in the chromosome. Functionally, core component of nucleosome. Nucleosomes wrap and compact DNA into chromatin, limiting DNA accessibility to the cellular machineries which require DNA as a template. Histones thereby play a central role in transcription regulation, DNA repair, DNA replication and chromosomal stability. DNA accessibility is regulated via a complex set of post-translational modifications of histones, also called histone code, and nucleosome remodeling. This chain is Histone H2B.2 (HTB2), found in Eremothecium gossypii (strain ATCC 10895 / CBS 109.51 / FGSC 9923 / NRRL Y-1056) (Yeast).